Here is a 458-residue protein sequence, read N- to C-terminus: GTPase Der (458 aa).

2 consecutive EngA-type G domains span residues 9–171 and 197–368; these read KTIA…DLNQ and IQVG…ECFS. Residues 15-22, 62-66, 123-126, 203-210, 250-254, and 314-317 contribute to the GTP site; these read GQPNVGKS, DTGGM, NKID, GRVNVGKS, DTAGI, and NKWD. A KH-like domain is found at 369–453; it reads KRIPTSLLNS…PLILNAKDKK (85 aa).

Belongs to the TRAFAC class TrmE-Era-EngA-EngB-Septin-like GTPase superfamily. EngA (Der) GTPase family. In terms of assembly, associates with the 50S ribosomal subunit.

Functionally, GTPase that plays an essential role in the late steps of ribosome biogenesis. This is GTPase Der from Helicobacter pylori (strain ATCC 700392 / 26695) (Campylobacter pylori).